A 369-amino-acid chain; its full sequence is Serine/threonine-protein kinase srb10 (369 aa).

A Protein kinase domain is found at 5–319 (YKIIGFISSG…AKQALEHVFF (315 aa)). ATP-binding positions include 11–19 (ISSGTYGKV) and Lys36. Asp140 serves as the catalytic Proton acceptor.

The protein belongs to the protein kinase superfamily. CMGC Ser/Thr protein kinase family. CDC2/CDKX subfamily. In terms of assembly, component of the Cdk8 module of the Mediator complex. The Cdk8 module is composed of srb8, srb9, srb10 and srb11. Interacts with med17 and med18.

The protein resides in the nucleus. The catalysed reaction is L-seryl-[protein] + ATP = O-phospho-L-seryl-[protein] + ADP + H(+). The enzyme catalyses L-threonyl-[protein] + ATP = O-phospho-L-threonyl-[protein] + ADP + H(+). It catalyses the reaction [DNA-directed RNA polymerase] + ATP = phospho-[DNA-directed RNA polymerase] + ADP + H(+). Functionally, catalytic component of the Cdk8 module/Srb8-11 module which is a regulatory module of the Mediator complex that regulates basal RNA polymerase II transcription. The Cdk8 module may sterically hinder the interaction between Mediator and RNA polymerase II leading to transcriptional repression of a subset of genes regulated by Mediator. This chain is Serine/threonine-protein kinase srb10 (srb10), found in Schizosaccharomyces pombe (strain 972 / ATCC 24843) (Fission yeast).